Here is a 341-residue protein sequence, read N- to C-terminus: Hyaluronan and proteoglycan link protein 2 (341 aa).

A signal peptide spans 1 to 27 (MPSWIPLPAFCCLLLPWAFTVFHKTLG). In terms of domain architecture, Ig-like V-type spans 35–143 (PHYLLPPIHE…GIEDESVALT (109 aa)). 5 cysteine pairs are disulfide-bonded: cysteine 58–cysteine 129, cysteine 171–cysteine 241, cysteine 195–cysteine 216, cysteine 266–cysteine 337, and cysteine 291–cysteine 312. 2 Link domains span residues 149-243 (VVFP…FCFT) and 246-339 (LAGQ…YCYA).

Belongs to the HAPLN family. As to expression, brain.

It is found in the secreted. The protein localises to the extracellular space. Its subcellular location is the extracellular matrix. Its function is as follows. Mediates a firm binding of versican V2 to hyaluronic acid. May play a pivotal role in the formation of the hyaluronan-associated matrix in the central nervous system (CNS) which facilitates neuronal conduction and general structural stabilization. Binds to hyaluronic acid. The polypeptide is Hyaluronan and proteoglycan link protein 2 (Hapln2) (Rattus norvegicus (Rat)).